Here is an 82-residue protein sequence, read N- to C-terminus: U-actitoxin-Oulsp2 (82 aa).

Positions 1-21 (MNTKLVVVFLLSAILFVSVTA) are cleaved as a signal peptide. Positions 22 to 46 (SRPGKDLERDEAYETYDDERPYFKR) are excised as a propeptide. The region spanning 48-82 (CKDNLPAATCSNVKANNNCSSEKYKTNCAKTCGEC) is the ShKT domain. Disulfide bonds link C48–C82, C57–C75, and C66–C79. The tract at residues 70–71 (KY) is theoritically crucial for binding to potassium channels.

Belongs to the sea anemone type 1 potassium channel toxin family. Type 1b subfamily.

The protein localises to the secreted. It localises to the nematocyst. In terms of biological role, probable toxin with unknown function. In contrast to similar toxins, this toxin does not inhibit voltage-gated potassium channels (tested at 100 nM). Does not show antimicrobial activities against bacteria and yeasts. The chain is U-actitoxin-Oulsp2 from Oulactis sp. (Sea anemone).